Reading from the N-terminus, the 254-residue chain is Triosephosphate isomerase 2 (254 aa).

9–11 (NMK) provides a ligand contact to substrate. The active-site Electrophile is the His-96. Glu-168 serves as the catalytic Proton acceptor. Residues Gly-174 and Ser-212 each coordinate substrate.

This sequence belongs to the triosephosphate isomerase family. As to quaternary structure, homodimer.

Its subcellular location is the cytoplasm. The enzyme catalyses D-glyceraldehyde 3-phosphate = dihydroxyacetone phosphate. It participates in polyol metabolism; glycerol degradation. Involved in the glycerol metabolism. Catalyzes stereospecifically the conversion of dihydroxyacetone phosphate (DHAP) to D-glyceraldehyde-3-phosphate (G3P). In Listeria innocua serovar 6a (strain ATCC BAA-680 / CLIP 11262), this protein is Triosephosphate isomerase 2.